We begin with the raw amino-acid sequence, 278 residues long: Urease accessory protein UreD (278 aa).

This sequence belongs to the UreD family. UreD, UreF and UreG form a complex that acts as a GTP-hydrolysis-dependent molecular chaperone, activating the urease apoprotein by helping to assemble the nickel containing metallocenter of UreC. The UreE protein probably delivers the nickel.

The protein localises to the cytoplasm. Its function is as follows. Required for maturation of urease via the functional incorporation of the urease nickel metallocenter. The protein is Urease accessory protein UreD of Staphylococcus epidermidis (strain ATCC 12228 / FDA PCI 1200).